The sequence spans 491 residues: Mitochondrial MYO2 receptor-related protein 1 (491 aa).

Residue threonine 12 is modified to Phosphothreonine. Phosphoserine occurs at positions 16 and 37. The stretch at 295 to 384 forms a coiled coil; the sequence is NAEEANSREK…CKKVLKKLTE (90 aa). An interaction with MYO2 region spans residues 300 to 439; sequence NSREKSNLDI…GTSSEEDHLT (140 aa). The segment at 419–491 is disordered; sequence KKIEEQPDSS…LPVQVEKKEK (73 aa). Residues 461–472 show a composition bias toward polar residues; it reads SAISTTASVQSG.

Interacts with MYO2 and PCL7. In terms of processing, phosphorylated by the cyclin-CDK PCL7-PHO85.

It localises to the bud tip. It is found in the bud neck. The protein resides in the mitochondrion outer membrane. Involved in the guiding of mitochondrial tubules to the bud tip during cell division. The polypeptide is Mitochondrial MYO2 receptor-related protein 1 (MMR1) (Saccharomyces cerevisiae (strain ATCC 204508 / S288c) (Baker's yeast)).